The chain runs to 78 residues: Probable [Fe-S]-dependent transcriptional repressor (78 aa).

Positions 56, 61, 64, and 70 each coordinate iron-sulfur cluster.

The protein belongs to the FeoC family.

Its function is as follows. May function as a transcriptional regulator that controls feoABC expression. The chain is Probable [Fe-S]-dependent transcriptional repressor from Cronobacter sakazakii (strain ATCC BAA-894) (Enterobacter sakazakii).